A 410-amino-acid polypeptide reads, in one-letter code: Transcription factor rglT (410 aa).

A disordered region spans residues 1 to 24 (MQFDSLPLPPSSSHDTTSVPPLKR). The segment at residues 28–55 (CDECRKRKLKCSGEATGCSRCLKQSLPC) is a DNA-binding region (zn(2)-C6 fungal-type). The segment at 353–372 (HRTRTVESPNEPGSCSPVSH) is disordered. A compositionally biased stretch (polar residues) spans 358 to 369 (VESPNEPGSCSP).

The protein resides in the nucleus. Transcription factor that is involved in protection against oxidative stress. Binds to promoter regions of the gliotoxin (GT) biosynthetic genes gliZ, gliF, gliT, gliM, gliA and gtmA. Two related but different DNA motifs (5'-TCGG-3' and 5'-CGGNCGG-3') are specifically enriched among rglT binding sites in GT-inducing conditions. Also indirectly regulates the expression of gliP, gliG, gliH and gliN. Plays a key role in resistance against exogenously-added GT and GT biosynthesis, mainly through the direct regulation of gliT. Furthermore, rglT is important for virulence in chemotherapeutic mice with invasive pulmonary aspergillosis (IPA). The chain is Transcription factor rglT from Aspergillus fumigatus (strain CBS 144.89 / FGSC A1163 / CEA10) (Neosartorya fumigata).